A 255-amino-acid polypeptide reads, in one-letter code: MRIIISPAKKMVENIEALPVCGEPSFIDQTNQLLTYLKSLSYEEAKEIWNCNDQLATMNFERIASMNLKTKLTPAILSYQGIQYQYMAPEVLEKDQLEYIQEHLYILSGFYGILKPLDGVTAYRLEMQAKVNLSDKKDLYEFWGSLLYNKLREETDFILNLASKEYSKCIERYVTEDVRLVTCVFGERKGEKVIEKGTYAKMARGEMVRYMAEHKISTMSEVKKFDRLDFSYDENLSNETKLVFLKGESNVRDRK.

Belongs to the UPF0246 family.

The sequence is that of UPF0246 protein Cphy_1568 from Lachnoclostridium phytofermentans (strain ATCC 700394 / DSM 18823 / ISDg) (Clostridium phytofermentans).